Consider the following 295-residue polypeptide: Bifunctional protein FolD (295 aa).

NADP(+) contacts are provided by residues 166–168, serine 191, and isoleucine 232; that span reads GRS.

This sequence belongs to the tetrahydrofolate dehydrogenase/cyclohydrolase family. Homodimer.

The enzyme catalyses (6R)-5,10-methylene-5,6,7,8-tetrahydrofolate + NADP(+) = (6R)-5,10-methenyltetrahydrofolate + NADPH. It carries out the reaction (6R)-5,10-methenyltetrahydrofolate + H2O = (6R)-10-formyltetrahydrofolate + H(+). The protein operates within one-carbon metabolism; tetrahydrofolate interconversion. In terms of biological role, catalyzes the oxidation of 5,10-methylenetetrahydrofolate to 5,10-methenyltetrahydrofolate and then the hydrolysis of 5,10-methenyltetrahydrofolate to 10-formyltetrahydrofolate. The polypeptide is Bifunctional protein FolD (Rhodopseudomonas palustris (strain BisA53)).